Here is a 352-residue protein sequence, read N- to C-terminus: Uroporphyrinogen decarboxylase (352 aa).

Substrate-binding positions include 27-31 (RQAGR), aspartate 77, tyrosine 154, threonine 209, and histidine 325.

This sequence belongs to the uroporphyrinogen decarboxylase family. In terms of assembly, homodimer.

Its subcellular location is the cytoplasm. It carries out the reaction uroporphyrinogen III + 4 H(+) = coproporphyrinogen III + 4 CO2. It participates in porphyrin-containing compound metabolism; protoporphyrin-IX biosynthesis; coproporphyrinogen-III from 5-aminolevulinate: step 4/4. Its function is as follows. Catalyzes the decarboxylation of four acetate groups of uroporphyrinogen-III to yield coproporphyrinogen-III. This chain is Uroporphyrinogen decarboxylase, found in Legionella pneumophila (strain Lens).